A 408-amino-acid polypeptide reads, in one-letter code: Formate-dependent phosphoribosylglycinamide formyltransferase (408 aa).

Residues glutamate 25 to leucine 26 and glutamate 85 contribute to the N(1)-(5-phospho-beta-D-ribosyl)glycinamide site. ATP-binding positions include arginine 118, lysine 159, serine 164 to glutamine 169, glutamate 199 to valine 202, and glutamate 207. An ATP-grasp domain is found at lysine 123 to leucine 318. Mg(2+)-binding residues include glutamate 277 and glutamate 289. Residues aspartate 296, lysine 365, and arginine 372 to arginine 373 contribute to the N(1)-(5-phospho-beta-D-ribosyl)glycinamide site.

It belongs to the PurK/PurT family. In terms of assembly, homodimer.

The enzyme catalyses N(1)-(5-phospho-beta-D-ribosyl)glycinamide + formate + ATP = N(2)-formyl-N(1)-(5-phospho-beta-D-ribosyl)glycinamide + ADP + phosphate + H(+). The protein operates within purine metabolism; IMP biosynthesis via de novo pathway; N(2)-formyl-N(1)-(5-phospho-D-ribosyl)glycinamide from N(1)-(5-phospho-D-ribosyl)glycinamide (formate route): step 1/1. Functionally, involved in the de novo purine biosynthesis. Catalyzes the transfer of formate to 5-phospho-ribosyl-glycinamide (GAR), producing 5-phospho-ribosyl-N-formylglycinamide (FGAR). Formate is provided by PurU via hydrolysis of 10-formyl-tetrahydrofolate. In Corynebacterium glutamicum (strain R), this protein is Formate-dependent phosphoribosylglycinamide formyltransferase.